Consider the following 162-residue polypeptide: Putative colanic acid biosynthesis acetyltransferase WcaB (162 aa).

Belongs to the transferase hexapeptide repeat family.

It functions in the pathway slime biogenesis; slime polysaccharide biosynthesis. In Escherichia coli O157:H7, this protein is Putative colanic acid biosynthesis acetyltransferase WcaB (wcaB).